Reading from the N-terminus, the 298-residue chain is Glyoxalase domain-containing protein 4 (298 aa).

One can recognise a VOC 1 domain in the interval 5-130 (RALHFVFKVG…GGYKFYLQDR (126 aa)). Lysine 109 bears the N6-succinyllysine mark. The residue at position 131 (serine 131) is a Phosphoserine. A VOC 2 domain is found at 137–258 (PVLKVTLAVS…DGHEICFVGD (122 aa)). Lysine 273 bears the N6-succinyllysine mark.

The protein belongs to the glyoxalase I family. In terms of assembly, interacts with NUDT9.

It localises to the mitochondrion. This chain is Glyoxalase domain-containing protein 4 (Glod4), found in Rattus norvegicus (Rat).